A 329-amino-acid chain; its full sequence is Homeobox protein Nkx-3.2 (329 aa).

Positions 107-188 (GLGSPCGGAP…PDPSPPDEDP (82 aa)) are disordered. Residues 110–124 (SPCGGAPGAGAGGEP) are compositionally biased toward gly residues. Residues 138–160 (ELGRPGDIGERKKQRPLEARAKG) are compositionally biased toward basic and acidic residues. The homeobox DNA-binding region spans 202-261 (KKRSRAAFSHAQVFELERRFNHQRYLSGPERADLAASLKLTETQVKIWFQNRRYKTKRRQ).

The protein belongs to the NK-3 homeobox family. As to expression, first expressed in developing facial cartilage in early tailbud embryos, with expression localized to the basihyobranchial, palatoquadrate and possibly Meckel's cartilages. Shortly after, a second area of expression is seen in the musculature of the anterior gut. During late embryogenesis, gut expression extends into hindgut tissues. In adults, expressed at a high level in the kidney, pancreas, spleen and stomach and at a slightly lower level in the intestine, skeletal muscle and tongue. Adult heart, liver and lung show little or no expression.

The protein localises to the nucleus. The sequence is that of Homeobox protein Nkx-3.2 (nkx3-2) from Xenopus laevis (African clawed frog).